Consider the following 112-residue polypeptide: Protein preY, mitochondrial (112 aa).

Residues 1-34 (MLSATCRRLAPALRRLRALSAVAGRFLQVPGARL) constitute a mitochondrion transit peptide. The 47-residue stretch at 49-95 (HPALLQFLVCPLSKKPLRYEASTNELVNEELGIAYPIIDGIPNMIPQ) folds into the TRM112 domain.

This sequence belongs to the PREY family. In terms of assembly, interacts (via TRM112 domain) with NDUFAF5; the interaction is direct and stabilizes NDUFAF5 protein. Interacts with COQ5; the interaction is direct, stabilizes COQ5 protein and associates PYURF with COQ enzyme complex.

Its subcellular location is the mitochondrion. In terms of biological role, in mitochondria, S-adenosylmethionine-dependent methyltransferase chaperone that supports both coenzyme Q biosynthesis, by stabilizing its components, such as COQ5, and NADH:ubiquinone oxidoreductase complex (complex I, MT-ND1) assembly, by stabilizing complex I assembly factors, such as NDUFAF5. This chain is Protein preY, mitochondrial (Pyurf), found in Mus musculus (Mouse).